The sequence spans 253 residues: Shikimate dehydrogenase (253 aa).

The active-site Proton acceptor is the Lys63. An NADP(+)-binding site is contributed by 115–119 (GAGGA).

The protein belongs to the shikimate dehydrogenase family.

The catalysed reaction is shikimate + NADP(+) = 3-dehydroshikimate + NADPH + H(+). It functions in the pathway metabolic intermediate biosynthesis; chorismate biosynthesis; chorismate from D-erythrose 4-phosphate and phosphoenolpyruvate: step 4/7. The chain is Shikimate dehydrogenase (aroE) from Thermotoga neapolitana (strain ATCC 49049 / DSM 4359 / NBRC 107923 / NS-E).